A 64-amino-acid polypeptide reads, in one-letter code: Conotoxin LiC121 (64 aa).

Residues 1 to 22 (MRCVPVFIILLLLSPSAPSVDA) form the signal peptide. The propeptide occupies 23–48 (HPKTKDDVPLASFHDDAKRTLQRLWI).

The protein belongs to the conotoxin T superfamily. In terms of processing, contains 2 disulfide bonds that can be either 'C1-C3, C2-C4' or 'C1-C4, C2-C3', since these disulfide connectivities have been observed for conotoxins with cysteine framework V (for examples, see AC P0DQQ7 and AC P81755). Expressed by the venom duct.

The protein localises to the secreted. The sequence is that of Conotoxin LiC121 from Conus lividus (Livid cone).